Here is a 710-residue protein sequence, read N- to C-terminus: METKNSEDWGKPQRKSESSSRKSNHGPAEMRPALPPENREAPETGEETQNEEPRRLIPIQRHSLFNRAVRHRHKARSTSERRASDQADLPKMGKSVNERSAFNLPQGRLSPWRTPAQRDTGAQEASESSSTPGNGTTPEECPALTDSPTTLTEALQMIHPIPADSWRNLIEQIGLLYQEYRDKSTLQEIETRRQQDAEIQGNSDGSQVGEDAGEEEEEEEEGEEEELASPPERRALPQICLLSNPHSRFNLWQDLPEIQSSGVLDILQPEEIRLQEAMFELVTSEASYYKSLNLLVSHFMENERLKKILHPSEAHILFSNVLDVMAVSERFLLELEHRMEENIVISDVCDIVYRYAADHFSVYITYVSNQTYQERTYKQLLQEKAAFRELIAQLELDPKCKGLPFSSFLILPFQRITRLKLLVQNILKRVEERSEREGTALDAHKELEMVVKACNEGVRKMSRTEQMISIQKKMEFKIKSVPIISHSRWLLKQGELQQMSGPKTSRTLRTKKLFREIYLFLFNDLLVICRQIPGDKYQVFDSAPRGLLRVEELEDQGQTLANVFILRLLENADDREATYMLKASSQSEMKRWMTSLAPNRRTKFVSFTSRLLDCPQVQCVHPYVAQQPDELTLELADILNILEKTEDGWIFGERLHDQERGWFPSSMTEEILNPKIRSQNLKECFRVHKMEDPQRSQNKDRRKLGSRNRQ.

A compositionally biased stretch (basic and acidic residues) spans 1 to 20 (METKNSEDWGKPQRKSESSS). Residues 1-146 (METKNSEDWG…TPEECPALTD (146 aa)) are disordered. The regulatory region; modulates activity toward RHOA, RAC1 and CDC42 stretch occupies residues 1-272 (METKNSEDWG…VLDILQPEEI (272 aa)). The segment covering 123-137 (QEASESSSTPGNGTT) has biased composition (polar residues). The residue at position 177 (Tyr-177) is a Phosphotyrosine. Positions 192-234 (RRQQDAEIQGNSDGSQVGEDAGEEEEEEEEGEEEELASPPERR) are disordered. Acidic residues predominate over residues 211 to 227 (DAGEEEEEEEEGEEEEL). A DH domain is found at 273–457 (RLQEAMFELV…EMVVKACNEG (185 aa)). One can recognise a PH domain in the interval 489-601 (WLLKQGELQQ…WMTSLAPNRR (113 aa)). The SH3 domain maps to 612–673 (LDCPQVQCVH…PSSMTEEILN (62 aa)). The span at 688–699 (HKMEDPQRSQNK) shows a compositional bias: basic and acidic residues. Residues 688 to 710 (HKMEDPQRSQNKDRRKLGSRNRQ) are disordered. Basic residues predominate over residues 700–710 (DRRKLGSRNRQ).

In terms of assembly, interacts with CDK5R1 and EPHA4; activated by EPHA4 through the CDK5 kinase. In terms of processing, src-dependent phosphorylation at Tyr-177 upon EPHA4 activation increases the guanine exchange factor activity toward RHOA. Phosphorylation by CDK5 upon EPHA4 activation by EFNA1 may regulate dendritic spine morphogenesis. As to expression, highly expressed in brain and to a lower extent in eye.

The protein resides in the cytoplasm. The protein localises to the membrane. Its subcellular location is the cell projection. It localises to the growth cone. Functionally, acts as a guanine nucleotide exchange factor (GEF) which differentially activates the GTPases RHOA, RAC1 and CDC42. Plays a role in axon guidance regulating ephrin-induced growth cone collapse and dendritic spine morphogenesis. Upon activation by ephrin through EPHA4, the GEF activity switches toward RHOA resulting in its activation. Activated RHOA promotes cone retraction at the expense of RAC1- and CDC42-stimulated growth cone extension. This Mus musculus (Mouse) protein is Ephexin-1 (Ngef).